We begin with the raw amino-acid sequence, 252 residues long: Chitooligosaccharide deacetylase (252 aa).

2 residues coordinate Mg(2+): histidine 61 and histidine 125.

It belongs to the YdjC deacetylase family. ChbG subfamily. Homodimer. The cofactor is Mg(2+).

It is found in the cytoplasm. It carries out the reaction N,N'-diacetylchitobiose + H2O = N-acetyl-beta-D-glucosaminyl-(1-&gt;4)-D-glucosamine + acetate. The enzyme catalyses diacetylchitobiose-6'-phosphate + H2O = N'-monoacetylchitobiose-6'-phosphate + acetate. It participates in glycan degradation; chitin degradation. Its function is as follows. Involved in the degradation of chitin. ChbG is essential for growth on the acetylated chitooligosaccharides chitobiose and chitotriose but is dispensable for growth on cellobiose and chitosan dimer, the deacetylated form of chitobiose. Deacetylation of chitobiose-6-P and chitotriose-6-P is necessary for both the activation of the chb promoter by the regulatory protein ChbR and the hydrolysis of phosphorylated beta-glucosides by the phospho-beta-glucosidase ChbF. Catalyzes the removal of only one acetyl group from chitobiose-6-P to yield monoacetylchitobiose-6-P, the inducer of ChbR and the substrate of ChbF. This Salmonella enteritidis PT4 (strain P125109) protein is Chitooligosaccharide deacetylase.